Consider the following 710-residue polypeptide: Lactoperoxidase (710 aa).

A signal peptide spans 1 to 22 (MKVLLRLPALLASLTLLQMAAS). A propeptide spanning residues 23-98 (TRNATRTATI…WEQSLKRLRR (76 aa)) is cleaved from the precursor. Asparagine 25, asparagine 104, and asparagine 131 each carry an N-linked (GlcNAc...) asparagine glycan. Cysteine 130 and cysteine 143 are disulfide-bonded. Aspartate 223 serves as a coordination point for heme b. Catalysis depends on histidine 224, which acts as the Proton acceptor. Aspartate 225 serves as a coordination point for Ca(2+). The N-linked (GlcNAc...) asparagine glycan is linked to asparagine 238. 2 disulfide bridges follow: cysteine 244–cysteine 254 and cysteine 248–cysteine 272. 4 residues coordinate Ca(2+): threonine 299, phenylalanine 301, aspartate 303, and serine 305. Serine 313 bears the Phosphoserine mark. An N-linked (GlcNAc...) asparagine glycan is attached at asparagine 320. An intrachain disulfide couples cysteine 352 to cysteine 363. Heme b contacts are provided by glutamate 373 and histidine 466. The residue at position 480 (tyrosine 480) is a 3'-nitrotyrosine. Disulfide bonds link cysteine 571/cysteine 628 and cysteine 669/cysteine 694.

Belongs to the peroxidase family. XPO subfamily. The cofactor is Ca(2+). It depends on heme b as a cofactor. As to expression, expressed in the lacrimal gland with higher levels and 3-fold higher activity in adult females than males and secreted into tears (at protein level).

It is found in the secreted. It localises to the cytoplasm. The enzyme catalyses 2 a phenolic donor + H2O2 = 2 a phenolic radical donor + 2 H2O. The catalysed reaction is thiocyanate + H2O2 + H(+) = hypothiocyanous acid + H2O. It carries out the reaction iodide + H2O2 = hypoiodite + H2O. Functionally, heme-containing oxidoreductase which catalyzes the conversion of thiocyanate (SCN(-)) into antimicrobial agent hypothiocyanous acid (OSCN(-)) in the presence of hydrogen peroxide (H2O2). Also involved in the conversion of iodide (I(-)) into hypoiodite (IO(-)) in the presence of H2O2. Responsible for the inactivation of a wide range of micro-organisms and hence, important component of defense mechanism. May be implicated in airway host defense against infection. May contribute to maintaining an appropriate H2O2 cellular level, therefore protecting cells from H2O2-caused injuries and inflammation. In Mesocricetus auratus (Golden hamster), this protein is Lactoperoxidase (LPO).